A 70-amino-acid polypeptide reads, in one-letter code: Brevinin-1MT2 (70 aa).

An N-terminal signal peptide occupies residues 1–22 (MFTLKKSMLLLFFLGTINLSLC). The propeptide occupies 23 to 44 (EQERNADEEERRDDDEMDVEVE). An intrachain disulfide couples cysteine 64 to cysteine 70.

This sequence belongs to the frog skin active peptide (FSAP) family. Brevinin subfamily. In terms of tissue distribution, expressed by the skin glands.

Its subcellular location is the secreted. Functionally, antimicrobial peptide with activity against a variety of Gram-negative and Gram-positive bacteria and against fungi. Shows strong hemolytic activity against human erythrocytes. The protein is Brevinin-1MT2 of Amolops mantzorum (Sichuan torrent frog).